Reading from the N-terminus, the 131-residue chain is Interleukin-13 (131 aa).

The signal sequence occupies residues 1–18 (MALWVTAVLALACLGGLA). N-linked (GlcNAc...) asparagine glycans are attached at residues asparagine 42, asparagine 52, and asparagine 75. 2 disulfide bridges follow: cysteine 51-cysteine 79 and cysteine 67-cysteine 93.

This sequence belongs to the IL-4/IL-13 family. In terms of assembly, interacts with IL13RA2.

It localises to the secreted. Its function is as follows. Cytokine that plays important roles in allergic inflammation and immune response to parasite infection. Synergizes with IL2 in regulating interferon-gamma synthesis. Stimulates B-cell proliferation, and activation of eosinophils, basophils, and mast cells. Plays an important role in controlling IL33 activity by modulating the production of transmembrane and soluble forms of interleukin-1 receptor-like 1/IL1RL1. Displays the capacity to antagonize Th1-driven proinflammatory immune response and downregulates synthesis of many proinflammatory cytokines including IL1, IL6, IL10, IL12 and TNF-alpha through a mechanism that partially involves suppression of NF-kappa-B. Also functions on nonhematopoietic cells, including endothelial cells where it induces vascular cell adhesion protein 1/VCAM1, which is important in the recruitment of eosinophils. Exerts its biological effects through its receptors which comprises the IL4R chain and the IL13RA1 chain, to activate JAK1 and TYK2, leading to the activation of STAT6. Aside from IL13RA1, another receptor IL13RA2 acts as a high affinity decoy for IL13 and mediates internalization and depletion of extracellular IL13. The protein is Interleukin-13 (Il13) of Mus musculus (Mouse).